The chain runs to 397 residues: Tryptophan synthase beta chain (397 aa).

Residue Lys-91 is modified to N6-(pyridoxal phosphate)lysine.

It belongs to the TrpB family. In terms of assembly, tetramer of two alpha and two beta chains. Pyridoxal 5'-phosphate serves as cofactor.

The catalysed reaction is (1S,2R)-1-C-(indol-3-yl)glycerol 3-phosphate + L-serine = D-glyceraldehyde 3-phosphate + L-tryptophan + H2O. It functions in the pathway amino-acid biosynthesis; L-tryptophan biosynthesis; L-tryptophan from chorismate: step 5/5. The beta subunit is responsible for the synthesis of L-tryptophan from indole and L-serine. The sequence is that of Tryptophan synthase beta chain from Bacillus cereus (strain ATCC 14579 / DSM 31 / CCUG 7414 / JCM 2152 / NBRC 15305 / NCIMB 9373 / NCTC 2599 / NRRL B-3711).